Consider the following 62-residue polypeptide: DNA-directed RNA polymerase subunit Rpo10 (62 aa).

Cys6, Cys9, Cys43, and Cys44 together coordinate Zn(2+).

This sequence belongs to the archaeal Rpo10/eukaryotic RPB10 RNA polymerase subunit family. In terms of assembly, part of the RNA polymerase complex. The cofactor is Zn(2+).

The protein localises to the cytoplasm. The enzyme catalyses RNA(n) + a ribonucleoside 5'-triphosphate = RNA(n+1) + diphosphate. Functionally, DNA-dependent RNA polymerase (RNAP) catalyzes the transcription of DNA into RNA using the four ribonucleoside triphosphates as substrates. The sequence is that of DNA-directed RNA polymerase subunit Rpo10 from Methanosphaerula palustris (strain ATCC BAA-1556 / DSM 19958 / E1-9c).